Here is an 87-residue protein sequence, read N- to C-terminus: Small ribosomal subunit protein bS20 (87 aa).

This sequence belongs to the bacterial ribosomal protein bS20 family.

Binds directly to 16S ribosomal RNA. This is Small ribosomal subunit protein bS20 from Alkaliphilus metalliredigens (strain QYMF).